The chain runs to 323 residues: o-succinylbenzoate synthase (323 aa).

The active-site Proton donor is the lysine 134. Mg(2+) is bound by residues aspartate 162, glutamate 191, and aspartate 214. The active-site Proton acceptor is the lysine 236.

This sequence belongs to the mandelate racemase/muconate lactonizing enzyme family. MenC type 1 subfamily. A divalent metal cation is required as a cofactor.

It carries out the reaction (1R,6R)-6-hydroxy-2-succinyl-cyclohexa-2,4-diene-1-carboxylate = 2-succinylbenzoate + H2O. It participates in quinol/quinone metabolism; 1,4-dihydroxy-2-naphthoate biosynthesis; 1,4-dihydroxy-2-naphthoate from chorismate: step 4/7. It functions in the pathway quinol/quinone metabolism; menaquinone biosynthesis. Functionally, converts 2-succinyl-6-hydroxy-2,4-cyclohexadiene-1-carboxylate (SHCHC) to 2-succinylbenzoate (OSB). The polypeptide is o-succinylbenzoate synthase (Proteus mirabilis (strain HI4320)).